Reading from the N-terminus, the 214-residue chain is MDQTHKKIHWRLGLCKCKNISLVETRESYRSLHPTNQPYRSAIQCSWADDNFVTPEEEYEPSLPSSESPTDSCHADHESPDSPKYQQPAPGERPECEIYKDLCSDPQTVDWAAPPLKIRDGRHQELFLLYAEITLFSHWASIKLVEWAKPLELIYVIVQTWEPKLTMKAKAANANFYVTFSNRHGFPYHAVIRRTTTRIPNQMSLEFKMLMRSK.

The tract at residues 56–92 (EEEYEPSLPSSESPTDSCHADHESPDSPKYQQPAPGE) is disordered.

Belongs to the UPF0725 (EMB2204) family.

The chain is UPF0725 protein At1g19565 from Arabidopsis thaliana (Mouse-ear cress).